The sequence spans 317 residues: Uridylate kinase (317 aa).

An ATP-binding site is contributed by lysine 9–glycine 12. Residue glycine 49 coordinates UMP. ATP-binding residues include glycine 50 and arginine 54. UMP is bound by residues aspartate 69 and threonine 130–threonine 137. Residues asparagine 158, tyrosine 164, and aspartate 167 each contribute to the ATP site.

The protein belongs to the UMP kinase family. Homohexamer.

It is found in the cytoplasm. The catalysed reaction is UMP + ATP = UDP + ADP. Its pathway is pyrimidine metabolism; CTP biosynthesis via de novo pathway; UDP from UMP (UMPK route): step 1/1. With respect to regulation, inhibited by UTP. Functionally, catalyzes the reversible phosphorylation of UMP to UDP. The chain is Uridylate kinase from Malacoplasma penetrans (strain HF-2) (Mycoplasma penetrans).